A 243-amino-acid chain; its full sequence is Segregation and condensation protein A (243 aa).

The protein belongs to the ScpA family. Component of a cohesin-like complex composed of ScpA, ScpB and the Smc homodimer, in which ScpA and ScpB bind to the head domain of Smc. The presence of the three proteins is required for the association of the complex with DNA.

The protein resides in the cytoplasm. Functionally, participates in chromosomal partition during cell division. May act via the formation of a condensin-like complex containing Smc and ScpB that pull DNA away from mid-cell into both cell halves. The polypeptide is Segregation and condensation protein A (Staphylococcus epidermidis (strain ATCC 35984 / DSM 28319 / BCRC 17069 / CCUG 31568 / BM 3577 / RP62A)).